Reading from the N-terminus, the 209-residue chain is MQSKFIVIEGLDGAGKSTAISFVRKYLEKNNLAAIYTREPGGTKIAEELRNLVLHNKYDEEIHSDSELLMIYAGRVQHYRNLIAPALEKGINVVSDRFYWSSMAYQGGGRGVELSKIRALNNNFLNGCEPDLVIYLDIDPILGLQRAQKVGSPDRIEKAGLEFFNRTRKVFKDLVKDLDNAIEIDAAKSIQEVEKQIYLILDKHFNFQN.

10 to 17 (GLDGAGKS) contacts ATP.

The protein belongs to the thymidylate kinase family.

The catalysed reaction is dTMP + ATP = dTDP + ADP. In terms of biological role, phosphorylation of dTMP to form dTDP in both de novo and salvage pathways of dTTP synthesis. The sequence is that of Thymidylate kinase from Francisella tularensis subsp. holarctica (strain OSU18).